We begin with the raw amino-acid sequence, 207 residues long: dTTP/UTP pyrophosphatase (207 aa).

The active-site Proton acceptor is the D87.

This sequence belongs to the Maf family. YhdE subfamily. Requires a divalent metal cation as cofactor.

It is found in the cytoplasm. The enzyme catalyses dTTP + H2O = dTMP + diphosphate + H(+). It carries out the reaction UTP + H2O = UMP + diphosphate + H(+). Its function is as follows. Nucleoside triphosphate pyrophosphatase that hydrolyzes dTTP and UTP. May have a dual role in cell division arrest and in preventing the incorporation of modified nucleotides into cellular nucleic acids. The chain is dTTP/UTP pyrophosphatase from Nitrosomonas europaea (strain ATCC 19718 / CIP 103999 / KCTC 2705 / NBRC 14298).